We begin with the raw amino-acid sequence, 182 residues long: Heat shock protein beta-2 (182 aa).

The sHSP domain maps to Arg-55–Ser-163.

This sequence belongs to the small heat shock protein (HSP20) family. In terms of assembly, interacts with DMPK; may enhance its kinase activity.

It localises to the cytoplasm. It is found in the nucleus. Functionally, may regulate the kinase DMPK. This Rattus norvegicus (Rat) protein is Heat shock protein beta-2 (Hspb2).